The primary structure comprises 486 residues: CREB-regulated transcription coactivator 1 homolog (486 aa).

Residues Met-1 to Leu-62 are disordered. A compositionally biased stretch (basic and acidic residues) spans Lys-9–Glu-23. Residues Gln-34–Thr-52 are compositionally biased toward polar residues. Ser-76 is modified (phosphoserine; by AMPK). The tract at residues Pro-103–Val-166 is disordered. Over residues Arg-144 to Asn-160 the composition is skewed to pro residues. Ser-179 carries the post-translational modification Phosphoserine; by AMPK. 3 disordered regions span residues Ser-214–Asn-278, Phe-327–Pro-417, and Ala-460–Asn-486. Composition is skewed to polar residues over residues Pro-224–Pro-245, Pro-387–Pro-402, and Pro-461–Phe-475.

This sequence belongs to the TORC family. As to quaternary structure, interacts with crh-1. Phosphorylated by AMPK at Ser-76 and Ser-179. Dephosphorylated by tax-6, the catalytic subunit of calcineurin. As to expression, expressed throughout the intestine and in head and tail neurons. Expressed in octopaminergic RIC neurons.

The protein resides in the nucleus. It localises to the cytoplasm. Its subcellular location is the cytosol. Functionally, transcriptional coactivator for crh-1, the homolog of vertebrate transcription factor CREB1. Regulates the transcription of metabolic genes and may have a role in mitochondrial dynamics and metabolism. Involved in modulation of lifespan. Through crh-1, counteracts the pro-lifespan-extension signals of AMPK both cell autonomously and, when expressed in neurons, at a systemic level, possibly using the catecholamine analog, octopamine, as a messenger. The sequence is that of CREB-regulated transcription coactivator 1 homolog from Caenorhabditis elegans.